Reading from the N-terminus, the 267-residue chain is Small ribosomal subunit protein uS5 (267 aa).

A disordered region spans residues methionine 1–lysine 37. Gly residues predominate over residues phenylalanine 11–glycine 20. A compositionally biased stretch (basic residues) spans arginine 21–glycine 34. Residue serine 60 is modified to Phosphoserine. An S5 DRBM domain is found at leucine 85–valine 148.

This sequence belongs to the universal ribosomal protein uS5 family.

Component of the ribosome, a large ribonucleoprotein complex responsible for the synthesis of proteins in the cell. The small ribosomal subunit (SSU) binds messenger RNAs (mRNAs) and translates the encoded message by selecting cognate aminoacyl-transfer RNA (tRNA) molecules. The large subunit (LSU) contains the ribosomal catalytic site termed the peptidyl transferase center (PTC), which catalyzes the formation of peptide bonds, thereby polymerizing the amino acids delivered by tRNAs into a polypeptide chain. The nascent polypeptides leave the ribosome through a tunnel in the LSU and interact with protein factors that function in enzymatic processing, targeting, and the membrane insertion of nascent chains at the exit of the ribosomal tunnel. Plays a role in the assembly and function of the 40S ribosomal subunit. Mutations in this protein affects the control of translational fidelity. Involved in nucleolar processing of pre-18S ribosomal RNA and ribosome assembly. Has a specific developmental role during oogenesis. The chain is Small ribosomal subunit protein uS5 (RpS2) from Drosophila melanogaster (Fruit fly).